The primary structure comprises 879 residues: Leucine--tRNA ligase (879 aa).

The 'HIGH' region signature appears at 45-55; the sequence is PYPSGALHMGH. Positions 637-641 match the 'KMSKS' region motif; sequence KMSKS. Lys-640 contacts ATP.

This sequence belongs to the class-I aminoacyl-tRNA synthetase family.

It localises to the cytoplasm. The enzyme catalyses tRNA(Leu) + L-leucine + ATP = L-leucyl-tRNA(Leu) + AMP + diphosphate. The chain is Leucine--tRNA ligase from Xylella fastidiosa (strain M12).